The sequence spans 268 residues: Small ribosomal subunit protein eS1 (268 aa).

The interval 1–21 is disordered; sequence MAVGKNKGLSKGGKKGGKKKV.

Belongs to the eukaryotic ribosomal protein eS1 family. As to quaternary structure, component of the small ribosomal subunit. Mature ribosomes consist of a small (40S) and a large (60S) subunit. The 40S subunit contains about 33 different proteins and 1 molecule of RNA (18S). The 60S subunit contains about 49 different proteins and 3 molecules of RNA (28S, 5.8S and 5S).

Its subcellular location is the cytoplasm. Essential for oogenesis; required for late follicle cell development. The chain is Small ribosomal subunit protein eS1 from Drosophila erecta (Fruit fly).